The following is a 57-amino-acid chain: Weak toxin CM-1b (57 aa).

4 disulfides stabilise this stretch: Cys3–Cys19, Cys12–Cys37, Cys40–Cys49, and Cys50–Cys55.

Belongs to the three-finger toxin family. Short-chain subfamily. Orphan group XX sub-subfamily. Expressed by the venom gland.

It is found in the secreted. This is Weak toxin CM-1b from Hemachatus haemachatus (Rinkhals).